Here is a 208-residue protein sequence, read N- to C-terminus: FMN-dependent NADH:quinone oxidoreductase (208 aa).

FMN-binding positions include 17–19, 99–102, and 143–146; these read SNS, MWNL, and SRGG.

Belongs to the azoreductase type 1 family. Homodimer. It depends on FMN as a cofactor.

The catalysed reaction is 2 a quinone + NADH + H(+) = 2 a 1,4-benzosemiquinone + NAD(+). The enzyme catalyses N,N-dimethyl-1,4-phenylenediamine + anthranilate + 2 NAD(+) = 2-(4-dimethylaminophenyl)diazenylbenzoate + 2 NADH + 2 H(+). Functionally, quinone reductase that provides resistance to thiol-specific stress caused by electrophilic quinones. In terms of biological role, also exhibits azoreductase activity. Catalyzes the reductive cleavage of the azo bond in aromatic azo compounds to the corresponding amines. In Staphylococcus aureus (strain bovine RF122 / ET3-1), this protein is FMN-dependent NADH:quinone oxidoreductase.